The primary structure comprises 498 residues: MEKYILSIDQGTTSSRAILFNQKGEIAGVAQREFKQYFPQSGWVEHDANEIWTSVLAVMTEVINENDVRADQIAGIGITNQRETTVVWDKHTGRPIYHAIVWQSRQTQSICSELKQQGYEQTFRDKTGLLLDPYFAGTKVKWILDNVEGAREKAENGDLLFGTIDTWLVWKLSGKAAHITDYSNASRTLMFNIHDLEWDDELLELLTVPKNMLPEVKPSSEIYGKTIDYHFYGQEVPIAGVAGDQQAALFGQACFECGDVKNTYGTGGFMLMNTGDKAVKSESGLLTTIAYGIDGKVNYALEGSIFVSGSAIQWLRDGLRMINSAPQSESYATRVDSTEGVYVVPAFVGLGTPYWDSEARGAIFGLTRGTEKEHFIRATLESLCYQTRDVMEAMSKDSGIDVQSLRVDGGAVKNNFIMQFQADIVNTSVERPEIQETTALGAAFLAGLAVGFWESKDDIAKNWKLEEKFDPKMDEGEREKLYRGWKKAVEATQVFKTE.

An ADP-binding site is contributed by threonine 12. Residues threonine 12, threonine 13, and serine 14 each contribute to the ATP site. Threonine 12 contacts sn-glycerol 3-phosphate. Arginine 16 is an ADP binding site. Sn-glycerol 3-phosphate contacts are provided by arginine 82, glutamate 83, and tyrosine 134. Residues arginine 82, glutamate 83, and tyrosine 134 each coordinate glycerol. The residue at position 230 (histidine 230) is a Phosphohistidine; by HPr. Aspartate 244 contacts sn-glycerol 3-phosphate. Glycerol contacts are provided by aspartate 244 and glutamine 245. 2 residues coordinate ADP: threonine 266 and glycine 309. ATP contacts are provided by threonine 266, glycine 309, glutamine 313, and glycine 410. ADP-binding residues include glycine 410 and asparagine 414.

Belongs to the FGGY kinase family. Homotetramer and homodimer (in equilibrium). Post-translationally, the phosphoenolpyruvate-dependent sugar phosphotransferase system (PTS), including enzyme I, and histidine-containing protein (HPr) are required for the phosphorylation, which leads to the activation of the enzyme.

It catalyses the reaction glycerol + ATP = sn-glycerol 3-phosphate + ADP + H(+). The protein operates within polyol metabolism; glycerol degradation via glycerol kinase pathway; sn-glycerol 3-phosphate from glycerol: step 1/1. Its activity is regulated as follows. Activated by phosphorylation and inhibited by fructose 1,6-bisphosphate (FBP). Functionally, key enzyme in the regulation of glycerol uptake and metabolism. Catalyzes the phosphorylation of glycerol to yield sn-glycerol 3-phosphate. In Staphylococcus aureus (strain Mu50 / ATCC 700699), this protein is Glycerol kinase.